We begin with the raw amino-acid sequence, 261 residues long: Ribosomal RNA small subunit methyltransferase A (261 aa).

S-adenosyl-L-methionine is bound by residues His12, Leu14, Gly39, Glu60, Asp81, and Asn104.

The protein belongs to the class I-like SAM-binding methyltransferase superfamily. rRNA adenine N(6)-methyltransferase family. RsmA subfamily.

The protein resides in the cytoplasm. It catalyses the reaction adenosine(1518)/adenosine(1519) in 16S rRNA + 4 S-adenosyl-L-methionine = N(6)-dimethyladenosine(1518)/N(6)-dimethyladenosine(1519) in 16S rRNA + 4 S-adenosyl-L-homocysteine + 4 H(+). In terms of biological role, specifically dimethylates two adjacent adenosines (A1518 and A1519) in the loop of a conserved hairpin near the 3'-end of 16S rRNA in the 30S particle. May play a critical role in biogenesis of 30S subunits. This is Ribosomal RNA small subunit methyltransferase A from Albidiferax ferrireducens (strain ATCC BAA-621 / DSM 15236 / T118) (Rhodoferax ferrireducens).